The sequence spans 343 residues: S-adenosylmethionine:tRNA ribosyltransferase-isomerase (343 aa).

Belongs to the QueA family. As to quaternary structure, monomer.

It is found in the cytoplasm. It carries out the reaction 7-aminomethyl-7-carbaguanosine(34) in tRNA + S-adenosyl-L-methionine = epoxyqueuosine(34) in tRNA + adenine + L-methionine + 2 H(+). It participates in tRNA modification; tRNA-queuosine biosynthesis. In terms of biological role, transfers and isomerizes the ribose moiety from AdoMet to the 7-aminomethyl group of 7-deazaguanine (preQ1-tRNA) to give epoxyqueuosine (oQ-tRNA). The polypeptide is S-adenosylmethionine:tRNA ribosyltransferase-isomerase (Pseudoalteromonas translucida (strain TAC 125)).